We begin with the raw amino-acid sequence, 194 residues long: Imidazoleglycerol-phosphate dehydratase (194 aa).

It belongs to the imidazoleglycerol-phosphate dehydratase family.

The protein resides in the cytoplasm. The enzyme catalyses D-erythro-1-(imidazol-4-yl)glycerol 3-phosphate = 3-(imidazol-4-yl)-2-oxopropyl phosphate + H2O. It functions in the pathway amino-acid biosynthesis; L-histidine biosynthesis; L-histidine from 5-phospho-alpha-D-ribose 1-diphosphate: step 6/9. In Limosilactobacillus fermentum (strain NBRC 3956 / LMG 18251) (Lactobacillus fermentum), this protein is Imidazoleglycerol-phosphate dehydratase.